The chain runs to 124 residues: Small ribosomal subunit protein uS12 (124 aa).

Asp-89 bears the 3-methylthioaspartic acid mark.

Belongs to the universal ribosomal protein uS12 family. Part of the 30S ribosomal subunit. Contacts proteins S8 and S17. May interact with IF1 in the 30S initiation complex.

With S4 and S5 plays an important role in translational accuracy. Its function is as follows. Interacts with and stabilizes bases of the 16S rRNA that are involved in tRNA selection in the A site and with the mRNA backbone. Located at the interface of the 30S and 50S subunits, it traverses the body of the 30S subunit contacting proteins on the other side and probably holding the rRNA structure together. The combined cluster of proteins S8, S12 and S17 appears to hold together the shoulder and platform of the 30S subunit. This Proteus mirabilis (strain HI4320) protein is Small ribosomal subunit protein uS12.